The following is a 2035-amino-acid chain: Proline-rich protein 12 (2035 aa).

Disordered regions lie at residues 210 to 280, 292 to 311, 329 to 584, and 645 to 685; these read GGGV…ERAL, RPAS…LQHY, CSPL…GAPG, and QAPS…GTPY. Pro residues predominate over residues 223-240; the sequence is QTPPYRPGPPDPPPPPRH. Over residues 249–261 the composition is skewed to low complexity; that stretch reads ASSSAATAAEPSS. A compositionally biased stretch (pro residues) spans 296–305; that stretch reads AQPPPPPPPA. Residues Ser-330 and Ser-338 each carry the phosphoserine modification. The segment covering 338 to 364 has biased composition (low complexity); it reads SPGAGEPSKGGPSGATAGAAGRATGPE. Gly residues predominate over residues 365–377; sequence TAGGGAAGGGGGY. 2 stretches are compositionally biased toward low complexity: residues 408–429 and 437–455; these read STAT…AGKA and SQAY…QAYG. Positions 476 to 487 are enriched in pro residues; the sequence is PPQPPSGPPPPG. 2 stretches are compositionally biased toward polar residues: residues 490-501 and 520-534; these read TCQSYSPDQLQG and GLPT…STGH. Positions 540 to 555 are enriched in gly residues; sequence GHGGGWGPSSLGGGGE. Ser-648 bears the Phosphoserine mark. Residues 670 to 681 show a composition bias toward gly residues; sequence GLGGSGGAGGAP. Thr-735 is subject to Phosphothreonine. 4 disordered regions span residues 755 to 844, 851 to 870, 879 to 920, and 946 to 1061; these read AFLQ…PLQL, HGLE…SLEP, GALE…APRF, and EMFG…CSTK. The span at 830-841 shows a compositional bias: pro residues; sequence PQPPPPPPPPMP. Ser-859 is modified (phosphoserine). The span at 1031–1046 shows a compositional bias: pro residues; the sequence is SAPPPPPPPPPPPPVS. Phosphoserine is present on residues Ser-1070 and Ser-1128. 4 disordered regions span residues 1112-1244, 1288-1355, 1367-1567, and 1662-1839; these read RRLP…DHNS, PLYQ…SPCK, TLPS…GEGI, and HRPP…PGRL. Residues 1190–1199 show a composition bias toward basic residues; it reads KPRGRGRGRG. Over residues 1200–1214 the composition is skewed to basic and acidic residues; it reads RKAEEMGGTRLEPLK. Lys-1214 is subject to N6-acetyllysine. Thr-1295 is subject to Phosphothreonine. Residue Ser-1299 is modified to Phosphoserine. The span at 1314–1329 shows a compositional bias: pro residues; it reads QPPPPTVPTVPHPAPS. Ser-1372, Ser-1373, and Ser-1378 each carry phosphoserine. Residues 1449-1529 show a composition bias toward pro residues; the sequence is PPTPPPAPTP…PPEEPPAPSP (81 aa). Basic and acidic residues predominate over residues 1535–1547; it reads PDARPLHLAKKQE. The residue at position 1555 (Thr-1555) is a Phosphothreonine. Phosphoserine is present on Ser-1562. The span at 1698–1709 shows a compositional bias: basic and acidic residues; the sequence is ETPEKMTSEKPP. The residue at position 1699 (Thr-1699) is a Phosphothreonine. Residues 1710 to 1730 are compositionally biased toward pro residues; that stretch reads EPAPEPAVPEPPAPEKPSPPR. The span at 1731 to 1768 shows a compositional bias: basic and acidic residues; the sequence is PVEKEKEKEKEKEKEKERVTRPLRSERATSGRQMRTDR. Positions 1769 to 1779 are enriched in polar residues; the sequence is SLATGQSTTSR. Residues 1817-1828 show a composition bias toward low complexity; that stretch reads SSSDSESSPGAP. The residue at position 1924 (Ser-1924) is a Phosphoserine.

Expressed in brain.

The protein localises to the nucleus. It is found in the postsynaptic density. The protein resides in the synapse. It localises to the synaptosome. The sequence is that of Proline-rich protein 12 from Mus musculus (Mouse).